The primary structure comprises 275 residues: Large ribosomal subunit protein uL2 (275 aa).

Residues 223 to 275 form a disordered region; sequence VAMNPVDHPHGGGEGRTSGGRHPVSPWGQPTKGYKTRSNKRTDKYIVRRRNKK.

The protein belongs to the universal ribosomal protein uL2 family. As to quaternary structure, part of the 50S ribosomal subunit. Forms a bridge to the 30S subunit in the 70S ribosome.

Its function is as follows. One of the primary rRNA binding proteins. Required for association of the 30S and 50S subunits to form the 70S ribosome, for tRNA binding and peptide bond formation. It has been suggested to have peptidyltransferase activity; this is somewhat controversial. Makes several contacts with the 16S rRNA in the 70S ribosome. This Shewanella piezotolerans (strain WP3 / JCM 13877) protein is Large ribosomal subunit protein uL2.